Reading from the N-terminus, the 142-residue chain is Mitochondrial import inner membrane translocase subunit TIM22-4 (142 aa).

4 helical membrane-spanning segments follow: residues 21-41 (VTSGVMGGGLGLMMGLFLGAL), 70-88 (SCKTFAVMGLVFSAAECIV), 97-113 (TVNTAIAGCVTGGSMSA), and 120-137 (ACIGCAGFAIFSVLIEKF).

The protein belongs to the Tim17/Tim22/Tim23 family.

The protein resides in the mitochondrion inner membrane. In terms of biological role, essential core component of the TIM22 complex, a complex that mediates the import and insertion of multi-pass transmembrane proteins into the mitochondrial inner membrane. In Arabidopsis thaliana (Mouse-ear cress), this protein is Mitochondrial import inner membrane translocase subunit TIM22-4 (TIM22-4).